The chain runs to 966 residues: Glycine dehydrogenase (decarboxylating) (966 aa).

Lysine 713 is subject to N6-(pyridoxal phosphate)lysine.

The protein belongs to the GcvP family. The glycine cleavage system is composed of four proteins: P, T, L and H. Pyridoxal 5'-phosphate is required as a cofactor.

It catalyses the reaction N(6)-[(R)-lipoyl]-L-lysyl-[glycine-cleavage complex H protein] + glycine + H(+) = N(6)-[(R)-S(8)-aminomethyldihydrolipoyl]-L-lysyl-[glycine-cleavage complex H protein] + CO2. In terms of biological role, the glycine cleavage system catalyzes the degradation of glycine. The P protein binds the alpha-amino group of glycine through its pyridoxal phosphate cofactor; CO(2) is released and the remaining methylamine moiety is then transferred to the lipoamide cofactor of the H protein. The sequence is that of Glycine dehydrogenase (decarboxylating) from Psychromonas ingrahamii (strain DSM 17664 / CCUG 51855 / 37).